The sequence spans 1437 residues: Envelopment polyprotein (1437 aa).

Residues M1–T21 form the signal peptide. The Lumenal segment spans residues A22 to N207. N65 and N88 each carry an N-linked (GlcNAc...) asparagine; by host glycan. A helical membrane pass occupies residues I208–T228. Over R229–K312 the chain is Cytoplasmic. The helical transmembrane segment at G313–L333 threads the bilayer. Topologically, residues E334–S373 are lumenal. Residues I374–L394 form a helical membrane-spanning segment. Topologically, residues E395 to K460 are cytoplasmic. The helical transmembrane segment at L461 to A481 threads the bilayer. Topologically, residues G482–Y1391 are lumenal. 2 N-linked (GlcNAc...) asparagine; by host glycosylation sites follow: N627 and N1173. The chain crosses the membrane as a helical span at residues L1392–L1412. Residues M1413 to R1437 are Cytoplasmic-facing.

The protein belongs to the orthobunyavirus envelope glycoprotein family. As to quaternary structure, glycoprotein C and Glycoprotein N interact with each other. Post-translationally, specific enzymatic cleavages in vivo yield mature proteins including nonstructural protein NSm, Glycoprotein C, and Glycoprotein N.

The protein localises to the virion membrane. It is found in the host Golgi apparatus membrane. The protein resides in the host endoplasmic reticulum membrane. Glycoprotein C and Glycoprotein N interact with each other and are present at the surface of the virion. They are able to attach the virion to a cell receptor and to promote fusion of membranes after endocytosis of the virion. This is Envelopment polyprotein (GP) from Culex.